The sequence spans 238 residues: Flagellar L-ring protein (238 aa).

A signal peptide spans 1 to 23 (MVKLFSYKIKYYLTAFFIIIIQS). Cys24 carries the N-palmitoyl cysteine lipid modification. Cys24 carries S-diacylglycerol cysteine lipidation.

It belongs to the FlgH family. The basal body constitutes a major portion of the flagellar organelle and consists of four rings (L,P,S, and M) mounted on a central rod.

The protein resides in the cell outer membrane. Its subcellular location is the bacterial flagellum basal body. Assembles around the rod to form the L-ring and probably protects the motor/basal body from shearing forces during rotation. The protein is Flagellar L-ring protein of Buchnera aphidicola subsp. Schizaphis graminum (strain Sg).